The chain runs to 124 residues: Small ribosomal subunit protein uS12 (124 aa).

Positions 1–28 are disordered; it reads MPTIQQLIRTERQSSKAKTKSPALKSCP. 3-methylthioaspartic acid is present on Asp89. The interval 104–124 is disordered; that stretch reads TAGVKDRRQSRSKYGAKTPKE.

The protein belongs to the universal ribosomal protein uS12 family. Part of the 30S ribosomal subunit. Contacts proteins S8 and S17. May interact with IF1 in the 30S initiation complex.

Functionally, with S4 and S5 plays an important role in translational accuracy. Its function is as follows. Interacts with and stabilizes bases of the 16S rRNA that are involved in tRNA selection in the A site and with the mRNA backbone. Located at the interface of the 30S and 50S subunits, it traverses the body of the 30S subunit contacting proteins on the other side and probably holding the rRNA structure together. The combined cluster of proteins S8, S12 and S17 appears to hold together the shoulder and platform of the 30S subunit. This chain is Small ribosomal subunit protein uS12, found in Synechococcus sp. (strain WH7803).